The sequence spans 547 residues: Chaperonin GroEL (547 aa).

ATP is bound by residues 30 to 33 (TLGP), Lys51, 87 to 91 (DGTTT), Gly415, and Asp496.

It belongs to the chaperonin (HSP60) family. In terms of assembly, forms a cylinder of 14 subunits composed of two heptameric rings stacked back-to-back. Interacts with the co-chaperonin GroES.

It is found in the cytoplasm. The enzyme catalyses ATP + H2O + a folded polypeptide = ADP + phosphate + an unfolded polypeptide.. Its function is as follows. Together with its co-chaperonin GroES, plays an essential role in assisting protein folding. The GroEL-GroES system forms a nano-cage that allows encapsulation of the non-native substrate proteins and provides a physical environment optimized to promote and accelerate protein folding. This chain is Chaperonin GroEL, found in Chlorobaculum parvum (strain DSM 263 / NCIMB 8327) (Chlorobium vibrioforme subsp. thiosulfatophilum).